The sequence spans 88 residues: Small ribosomal subunit protein bS20 (88 aa).

The tract at residues methionine 1–methionine 27 is disordered.

Belongs to the bacterial ribosomal protein bS20 family.

In terms of biological role, binds directly to 16S ribosomal RNA. This chain is Small ribosomal subunit protein bS20, found in Shewanella sediminis (strain HAW-EB3).